The sequence spans 511 residues: Bifunctional purine biosynthesis protein PurH (511 aa).

Residues 1–145 (MKKRALVSVS…KNHKFVSVIV (145 aa)) enclose the MGS-like domain.

This sequence belongs to the PurH family.

The catalysed reaction is (6R)-10-formyltetrahydrofolate + 5-amino-1-(5-phospho-beta-D-ribosyl)imidazole-4-carboxamide = 5-formamido-1-(5-phospho-D-ribosyl)imidazole-4-carboxamide + (6S)-5,6,7,8-tetrahydrofolate. It carries out the reaction IMP + H2O = 5-formamido-1-(5-phospho-D-ribosyl)imidazole-4-carboxamide. The protein operates within purine metabolism; IMP biosynthesis via de novo pathway; 5-formamido-1-(5-phospho-D-ribosyl)imidazole-4-carboxamide from 5-amino-1-(5-phospho-D-ribosyl)imidazole-4-carboxamide (10-formyl THF route): step 1/1. It functions in the pathway purine metabolism; IMP biosynthesis via de novo pathway; IMP from 5-formamido-1-(5-phospho-D-ribosyl)imidazole-4-carboxamide: step 1/1. The chain is Bifunctional purine biosynthesis protein PurH from Bacillus thuringiensis (strain Al Hakam).